We begin with the raw amino-acid sequence, 842 residues long: Alanine--tRNA ligase (842 aa).

4 residues coordinate Zn(2+): histidine 549, histidine 553, cysteine 650, and histidine 654.

The protein belongs to the class-II aminoacyl-tRNA synthetase family. The cofactor is Zn(2+).

It localises to the cytoplasm. The enzyme catalyses tRNA(Ala) + L-alanine + ATP = L-alanyl-tRNA(Ala) + AMP + diphosphate. Its function is as follows. Catalyzes the attachment of alanine to tRNA(Ala) in a two-step reaction: alanine is first activated by ATP to form Ala-AMP and then transferred to the acceptor end of tRNA(Ala). Also edits incorrectly charged Ser-tRNA(Ala) and Gly-tRNA(Ala) via its editing domain. The protein is Alanine--tRNA ligase of Campylobacter jejuni subsp. jejuni serotype O:6 (strain 81116 / NCTC 11828).